A 254-amino-acid polypeptide reads, in one-letter code: L-rhamnose 1-dehydrogenase (NADP(+)) (254 aa).

Positions 13, 15, 16, 18, 64, and 91 each coordinate NADP(+). S144 functions as the Proton donor in the catalytic mechanism. Residues S144, S146, Q154, and Y157 each coordinate beta-L-rhamnose. Residues Y157 and K161 each contribute to the NADP(+) site. Y157 acts as the Proton acceptor in catalysis. K161 acts as the Lowers pKa of active site Tyr in catalysis. T189 serves as a coordination point for beta-L-rhamnose. I190 serves as a coordination point for NADP(+). A beta-L-rhamnose-binding site is contributed by N195.

It belongs to the short-chain dehydrogenases/reductases (SDR) family.

The enzyme catalyses L-rhamnofuranose + NADP(+) = L-rhamnono-1,4-lactone + NADPH + H(+). It functions in the pathway carbohydrate degradation; L-rhamnose degradation. Involved in the non-phosphorylated metabolic pathway of L-rhamnose catabolism. Catalyzes the oxidation of L-rhamnose to yield L-rhamnono-1,4-lactone. It can also oxidize L-lyxose and L-mannose, and uses only NADP. This chain is L-rhamnose 1-dehydrogenase (NADP(+)), found in Thermoplasma acidophilum (strain ATCC 25905 / DSM 1728 / JCM 9062 / NBRC 15155 / AMRC-C165).